The primary structure comprises 379 residues: Succinyl-diaminopimelate desuccinylase (379 aa).

Zn(2+) is bound at residue His70. The active site involves Asp72. Asp103 serves as a coordination point for Zn(2+). Glu137 acts as the Proton acceptor in catalysis. Residues Glu138, Glu166, and His352 each coordinate Zn(2+).

It belongs to the peptidase M20A family. DapE subfamily. In terms of assembly, homodimer. Zn(2+) serves as cofactor. The cofactor is Co(2+).

It catalyses the reaction N-succinyl-(2S,6S)-2,6-diaminopimelate + H2O = (2S,6S)-2,6-diaminopimelate + succinate. It functions in the pathway amino-acid biosynthesis; L-lysine biosynthesis via DAP pathway; LL-2,6-diaminopimelate from (S)-tetrahydrodipicolinate (succinylase route): step 3/3. Functionally, catalyzes the hydrolysis of N-succinyl-L,L-diaminopimelic acid (SDAP), forming succinate and LL-2,6-diaminopimelate (DAP), an intermediate involved in the bacterial biosynthesis of lysine and meso-diaminopimelic acid, an essential component of bacterial cell walls. This Burkholderia pseudomallei (strain 1106a) protein is Succinyl-diaminopimelate desuccinylase.